A 418-amino-acid polypeptide reads, in one-letter code: Serine--tRNA ligase (418 aa).

231–233 (TAE) is an L-serine binding site. 262-264 (RSE) contacts ATP. Glu285 is a binding site for L-serine. 349–352 (EISS) provides a ligand contact to ATP. Ser385 contributes to the L-serine binding site.

The protein belongs to the class-II aminoacyl-tRNA synthetase family. Type-1 seryl-tRNA synthetase subfamily. As to quaternary structure, homodimer. The tRNA molecule binds across the dimer.

Its subcellular location is the cytoplasm. It carries out the reaction tRNA(Ser) + L-serine + ATP = L-seryl-tRNA(Ser) + AMP + diphosphate + H(+). The enzyme catalyses tRNA(Sec) + L-serine + ATP = L-seryl-tRNA(Sec) + AMP + diphosphate + H(+). Its pathway is aminoacyl-tRNA biosynthesis; selenocysteinyl-tRNA(Sec) biosynthesis; L-seryl-tRNA(Sec) from L-serine and tRNA(Sec): step 1/1. Its function is as follows. Catalyzes the attachment of serine to tRNA(Ser). Is also able to aminoacylate tRNA(Sec) with serine, to form the misacylated tRNA L-seryl-tRNA(Sec), which will be further converted into selenocysteinyl-tRNA(Sec). This Ureaplasma urealyticum serovar 10 (strain ATCC 33699 / Western) protein is Serine--tRNA ligase.